A 295-amino-acid chain; its full sequence is Ribosomal protein L11 methyltransferase (295 aa).

Thr-146, Gly-167, Asp-189, and Asn-231 together coordinate S-adenosyl-L-methionine.

It belongs to the methyltransferase superfamily. PrmA family.

Its subcellular location is the cytoplasm. The catalysed reaction is L-lysyl-[protein] + 3 S-adenosyl-L-methionine = N(6),N(6),N(6)-trimethyl-L-lysyl-[protein] + 3 S-adenosyl-L-homocysteine + 3 H(+). Methylates ribosomal protein L11. This chain is Ribosomal protein L11 methyltransferase, found in Vibrio vulnificus (strain CMCP6).